The chain runs to 129 residues: MATKKGTRKRRAKKNVETGVAHIHSTFNNTLIMITDVQGNAVAWSSAGVLGFKGSRKSTPFAAQMASEAAAKQAMEHGMKTVEVEVKGPGSGREAAIRALQATGLEVTAIRDVTPVPHNGSRPPKRRRV.

This sequence belongs to the universal ribosomal protein uS11 family. Part of the 30S ribosomal subunit. Interacts with proteins S7 and S18. Binds to IF-3.

In terms of biological role, located on the platform of the 30S subunit, it bridges several disparate RNA helices of the 16S rRNA. Forms part of the Shine-Dalgarno cleft in the 70S ribosome. This Limosilactobacillus reuteri (strain DSM 20016) (Lactobacillus reuteri) protein is Small ribosomal subunit protein uS11.